The primary structure comprises 326 residues: WRKY transcription factor 8 (326 aa).

A disordered region spans residues 115-172 (VRVSASPSSSEADHHPGEDSGKIRKKREVRDGGEDDQRSQKVVKTKKKEEKKKEPRVS). Basic and acidic residues-rich tracts occupy residues 125–153 (EADHHPGEDSGKIRKKREVRDGGEDDQRS) and 161–170 (KKEEKKKEPR). The segment at residues 177 to 242 (TEVDHLEDGY…YESQHNHPIP (66 aa)) is a DNA-binding region (WRKY).

It belongs to the WRKY group II-c family. As to quaternary structure, interacts with VQ9 (via N-terminus). In terms of tissue distribution, highly expressed in roots and at lower levels in rosette leaves, cauline leaves, stems, flowers and siliques.

The protein localises to the nucleus. Functionally, transcription factor. Interacts specifically with the W box (5'-TTGAC[CT]-3'), a frequently occurring stress-responsive cis-acting element. Functions as a positive regulator of salt stress response. Binds the W box of LTI78/RD29A stress-response gene and directly regulates its transcription under salt stress. Functions antagonistically with VQ9 to regulate sodium and potassium homeostasis under salt stress by regulating the expression of downstream SOS (SALT OVERLY SENSITIVE) stress-responsive genes. The DNA-binding activity of WRKY8 is decreased by VQ9. Functions as a negative regulator of basal resistance to the bacterial pathogen P.syringae and as positive regulator of resistance to the fungal pathogen to B.cinerea. Functions as a positive regulator of defense response againt tobamovirus (TMV) by regulating both the abscisic acid and ethylene signaling pathways. Positively regulates ABI4 expression and negatively modulates ACS6 and ERF104 expression by directly binding to the W box consensus motifs within their promoters. The sequence is that of WRKY transcription factor 8 (WRKY8) from Arabidopsis thaliana (Mouse-ear cress).